A 61-amino-acid polypeptide reads, in one-letter code: Probable pancreatic secretory proteinase inhibitor (61 aa).

Residues 6–61 (LYRKPSCGEMSAMHACPMNFAPVCGTDGNTYPNECSLCFQRQNTKTDILITKDDRC) enclose the Kazal-like domain. Disulfide bonds link Cys-12/Cys-43, Cys-21/Cys-40, and Cys-29/Cys-61.

It is found in the secreted. The chain is Probable pancreatic secretory proteinase inhibitor from Anguilla anguilla (European freshwater eel).